Consider the following 407-residue polypeptide: Imidazolonepropionase (407 aa).

Residues His68 and His70 each coordinate Fe(3+). The Zn(2+) site is built by His68 and His70. 4-imidazolone-5-propanoate-binding residues include Arg77, Tyr140, and His173. An N-formimidoyl-L-glutamate-binding site is contributed by Tyr140. His238 lines the Fe(3+) pocket. His238 lines the Zn(2+) pocket. 4-imidazolone-5-propanoate is bound at residue Gln241. Position 313 (Asp313) interacts with Fe(3+). Asp313 is a Zn(2+) binding site. 2 residues coordinate N-formimidoyl-L-glutamate: Asn315 and Gly317. Position 318 (Thr318) interacts with 4-imidazolone-5-propanoate.

The protein belongs to the metallo-dependent hydrolases superfamily. HutI family. The cofactor is Zn(2+). It depends on Fe(3+) as a cofactor.

It localises to the cytoplasm. It catalyses the reaction 4-imidazolone-5-propanoate + H2O = N-formimidoyl-L-glutamate. It functions in the pathway amino-acid degradation; L-histidine degradation into L-glutamate; N-formimidoyl-L-glutamate from L-histidine: step 3/3. Functionally, catalyzes the hydrolytic cleavage of the carbon-nitrogen bond in imidazolone-5-propanoate to yield N-formimidoyl-L-glutamate. It is the third step in the universal histidine degradation pathway. This chain is Imidazolonepropionase, found in Burkholderia orbicola (strain MC0-3).